The chain runs to 69 residues: Putative membrane protein insertion efficiency factor (69 aa).

The protein belongs to the UPF0161 family.

The protein localises to the cell membrane. In terms of biological role, could be involved in insertion of integral membrane proteins into the membrane. The protein is Putative membrane protein insertion efficiency factor of Clostridium botulinum (strain 657 / Type Ba4).